A 1043-amino-acid polypeptide reads, in one-letter code: Sucrose-phosphate synthase 1 (1043 aa).

Positions 95 to 117 (EEKEAQRLAKRRLEREKGRREAT) are enriched in basic and acidic residues. The interval 95 to 127 (EEKEAQRLAKRRLEREKGRREATADMSEEFSEG) is disordered. A phosphoserine mark is found at S121, S125, S152, and S155. The interval 670–693 (PRHPQWQSDDGGDNSEPESPSDSL) is disordered.

Belongs to the glycosyltransferase 1 family. In terms of assembly, homodimer or homotetramer. Phosphorylated at Ser-152 upon sucrose supply. Expressed in seeds, stems, rosette leaves, flowers and siliques. Highly expressed in maturing nectaries.

The catalysed reaction is beta-D-fructose 6-phosphate + UDP-alpha-D-glucose = sucrose 6(F)-phosphate + UDP + H(+). It participates in glycan biosynthesis; sucrose biosynthesis; sucrose from D-fructose 6-phosphate and UDP-alpha-D-glucose: step 1/2. With respect to regulation, activity is regulated by phosphorylation and moderated by concentration of metabolites and light. Its function is as follows. Plays a major role in photosynthetic sucrose synthesis by catalyzing the rate-limiting step of sucrose biosynthesis from UDP-glucose and fructose- 6-phosphate. Involved in the regulation of carbon partitioning in the leaves of plants. May regulate the synthesis of sucrose and therefore play a major role as a limiting factor in the export of photoassimilates out of the leaf. Plays a role for sucrose availability that is essential for plant growth and fiber elongation. Required for nectar secretion. This is Sucrose-phosphate synthase 1 (SPS1) from Arabidopsis thaliana (Mouse-ear cress).